A 325-amino-acid polypeptide reads, in one-letter code: Helicase VP6-A (325 aa).

Disordered regions lie at residues 1 to 126 and 175 to 231; these read MLLA…TNGR and GVAE…PARI. 4 stretches are compositionally biased toward basic and acidic residues: residues 8-18, 32-54, 61-79, and 92-105; these read VIKRSSEELKQ, EGGK…KDGE, GQKE…DRRI, and PGER…RGDG. K106 contacts ATP. A compositionally biased stretch (gly residues) spans 106–122; it reads KVGGGGGDADAGVGATG. Over residues 175–229 the composition is skewed to basic and acidic residues; it reads GVAEQTERLRDLRRKEKNGTHAKAVERGGRKQRKESHGDAQREGVEEEKTSEEPA.

The protein belongs to the orbivirus VP6 family. In terms of assembly, homohexamer.

Its subcellular location is the virion. It catalyses the reaction ATP + H2O = ADP + phosphate + H(+). Its function is as follows. ATP dependent RNA helicase essential for RNA packaging and viral transcription. Possesses ss- and dsRNA-binding capacity. The polypeptide is Helicase VP6-A (Segment-9) (Bluetongue virus 11 (isolate USA) (BTV 11)).